The following is a 483-amino-acid chain: Proline--tRNA ligase (483 aa).

It belongs to the class-II aminoacyl-tRNA synthetase family. ProS type 3 subfamily. As to quaternary structure, homodimer.

Its subcellular location is the cytoplasm. The enzyme catalyses tRNA(Pro) + L-proline + ATP = L-prolyl-tRNA(Pro) + AMP + diphosphate. Functionally, catalyzes the attachment of proline to tRNA(Pro) in a two-step reaction: proline is first activated by ATP to form Pro-AMP and then transferred to the acceptor end of tRNA(Pro). The chain is Proline--tRNA ligase from Natranaerobius thermophilus (strain ATCC BAA-1301 / DSM 18059 / JW/NM-WN-LF).